The primary structure comprises 331 residues: Cysteine and histidine-rich domain-containing protein 1 (331 aa).

Ala-2 carries the post-translational modification N-acetylalanine. Positions 2–77 are interaction with PPP5C; the sequence is ALLCYNRGCG…KPPEPVKPEV (76 aa). 6 residues coordinate Zn(2+): Cys-5, Cys-10, Cys-24, His-27, Cys-42, and Cys-43. CHORD domains lie at 5–64 and 157–216; these read CYNR…KGRH and CKNG…RGKH. A Phosphothreonine modification is found at Thr-47. At Ser-51 the chain carries Phosphoserine. Zn(2+)-binding residues include Cys-59, His-64, Cys-157, Cys-162, Cys-176, His-179, Cys-194, Cys-195, Cys-211, and His-216. The disordered stretch occupies residues 62–82; sequence GRHNSEKPPEPVKPEVKTTEK. Residues 64-82 are compositionally biased toward basic and acidic residues; sequence HNSEKPPEPVKPEVKTTEK. Residues 65-316 are interaction with HSP90AA1 and HSP90AB1; the sequence is NSEKPPEPVK…AEPMQWASLE (252 aa). Residues 227-316 enclose the CS domain; the sequence is VVPCRHDWHQ…AEPMQWASLE (90 aa).

Interacts with HSP90AA1, HSP90AB1, PPP5C, ROCK1 and ROCK2.

Its function is as follows. Regulates centrosome duplication, probably by inhibiting the kinase activity of ROCK2. Proposed to act as co-chaperone for HSP90. May play a role in the regulation of NOD1 via a HSP90 chaperone complex. In vitro, has intrinsic chaperone activity. This function may be achieved by inhibiting association of ROCK2 with NPM1. Plays a role in ensuring the localization of the tyrosine kinase receptor EGFR to the plasma membrane, and thus ensures the subsequent regulation of EGFR activity and EGF-induced actin cytoskeleton remodeling. Involved in stress response. Prevents tumorigenesis. This is Cysteine and histidine-rich domain-containing protein 1 (Chordc1) from Rattus norvegicus (Rat).